A 282-amino-acid polypeptide reads, in one-letter code: Elongation factor Ts (282 aa).

The involved in Mg(2+) ion dislocation from EF-Tu stretch occupies residues threonine 80 to valine 83.

Belongs to the EF-Ts family.

It localises to the cytoplasm. In terms of biological role, associates with the EF-Tu.GDP complex and induces the exchange of GDP to GTP. It remains bound to the aminoacyl-tRNA.EF-Tu.GTP complex up to the GTP hydrolysis stage on the ribosome. The polypeptide is Elongation factor Ts (Chlamydia trachomatis serovar A (strain ATCC VR-571B / DSM 19440 / HAR-13)).